Consider the following 103-residue polypeptide: Pyrimidine/purine nucleoside phosphorylase (103 aa).

Belongs to the nucleoside phosphorylase PpnP family.

The catalysed reaction is a purine D-ribonucleoside + phosphate = a purine nucleobase + alpha-D-ribose 1-phosphate. It catalyses the reaction adenosine + phosphate = alpha-D-ribose 1-phosphate + adenine. It carries out the reaction cytidine + phosphate = cytosine + alpha-D-ribose 1-phosphate. The enzyme catalyses guanosine + phosphate = alpha-D-ribose 1-phosphate + guanine. The catalysed reaction is inosine + phosphate = alpha-D-ribose 1-phosphate + hypoxanthine. It catalyses the reaction thymidine + phosphate = 2-deoxy-alpha-D-ribose 1-phosphate + thymine. It carries out the reaction uridine + phosphate = alpha-D-ribose 1-phosphate + uracil. The enzyme catalyses xanthosine + phosphate = alpha-D-ribose 1-phosphate + xanthine. Catalyzes the phosphorolysis of diverse nucleosides, yielding D-ribose 1-phosphate and the respective free bases. Can use uridine, adenosine, guanosine, cytidine, thymidine, inosine and xanthosine as substrates. Also catalyzes the reverse reactions. The protein is Pyrimidine/purine nucleoside phosphorylase of Shewanella sp. (strain W3-18-1).